We begin with the raw amino-acid sequence, 138 residues long: Large ribosomal subunit protein uL16 (138 aa).

Residues 1–13 show a composition bias toward basic residues; sequence MLQPKRRKYRKEQ. The disordered stretch occupies residues 1-20; that stretch reads MLQPKRRKYRKEQKGRNTGI.

It belongs to the universal ribosomal protein uL16 family. Part of the 50S ribosomal subunit.

In terms of biological role, binds 23S rRNA and is also seen to make contacts with the A and possibly P site tRNAs. This chain is Large ribosomal subunit protein uL16, found in Paraburkholderia phytofirmans (strain DSM 17436 / LMG 22146 / PsJN) (Burkholderia phytofirmans).